The following is a 279-amino-acid chain: NADPH-dependent 7-cyano-7-deazaguanine reductase (279 aa).

86 to 88 (IES) lines the substrate pocket. 88-89 (SK) is a binding site for NADPH. Catalysis depends on cysteine 187, which acts as the Thioimide intermediate. The Proton donor role is filled by aspartate 194. 226–227 (HE) contacts substrate. 255–256 (RG) is a binding site for NADPH.

This sequence belongs to the GTP cyclohydrolase I family. QueF type 2 subfamily. As to quaternary structure, homodimer.

The protein resides in the cytoplasm. It carries out the reaction 7-aminomethyl-7-carbaguanine + 2 NADP(+) = 7-cyano-7-deazaguanine + 2 NADPH + 3 H(+). It functions in the pathway tRNA modification; tRNA-queuosine biosynthesis. Catalyzes the NADPH-dependent reduction of 7-cyano-7-deazaguanine (preQ0) to 7-aminomethyl-7-deazaguanine (preQ1). This is NADPH-dependent 7-cyano-7-deazaguanine reductase from Glaesserella parasuis serovar 5 (strain SH0165) (Haemophilus parasuis).